A 459-amino-acid polypeptide reads, in one-letter code: Prenyltransferase penI (459 aa).

L-tryptophan contacts are provided by residues 107 to 108 and glutamate 111; that span reads VV. Residues arginine 126, arginine 276, lysine 278, tyrosine 280, and tyrosine 384 each contribute to the substrate site.

This sequence belongs to the tryptophan dimethylallyltransferase family.

It carries out the reaction quinolinone B + dimethylallyl diphosphate = peniprequinolone + diphosphate. The protein operates within secondary metabolite biosynthesis. Its pathway is alkaloid biosynthesis. It functions in the pathway mycotoxin biosynthesis. Functionally, prenyltransferase; part of the gene cluster that mediates the biosynthesis of penigequinolones, potent insecticidal alkaloids that contain a highly modified 10-carbon prenyl group. The first stage is catalyzed by the nonribosomal peptide synthetase penN that condenses anthranilic acid and O-methyl-L-tyrosine to produce 4'-methoxycyclopeptin. 4'-methoxycyclopeptin is then converted to 4'-methoxydehydrocyclopeptin by the ketoglutarate-dependent dioxygenase penM through dehydrogenation to form a double bond between C-alpha and C-beta of the O-methyltyrosine side chain. PenM also converts its first product methoxydehydrocyclopeptin to 4'-methoxycyclopenin. The following conversion of 4'methoxycyclopenin into 4'-methoxyviridicatin is catalyzed by the cyclopenase penL. 4'-methoxyviridicatin is the precursor of quinolone natural products, and is further converted to quinolinone B. The prenyltransferase penI then catalyzes the canonical Friedel-Crafts alkylation of quinolinone B with dimethylallyl cation to yield dimethylallyl quinolone, which is subjected to FAD-dependent dehydrogenation by the FAD-linked oxidoreductase penH to yield conjugated aryl diene. The delta(3') double bond then serves as the site of the second alkylation with DMAPP catalyzed by the prenyltransferase penG to yield a carbenium ion intermediate, which can be attacked by H(2)O to yield a styrenyl quinolone containing a C3'-hydroxyprenyl chain, or undergo cyclization to yield yaequinolones J1 and J2. The conversion of the styrenyl quinolone into the tetrahydrofuran-containing yaequinolone C is performed by the FAD-dependent monooxygenase penE and involves epoxidation of the terminal C7'-C8' olefin, followed by epoxide ring opening initiated by the C3' hydroxyl group. The predicted cysteine hydrolase penJ acts as an epoxide hydrolase that enhances the rate of the 5-exo-tet cyclization step, increasing the yield of yaequinolone C. PenF catalyzes the cationic rearrangement of the epoxide formed by penE (before ring opening to produce yaequinolone C) into yaequinolone D. Finally, the short-chain dehydrogenase/reductase (SDR)-like reductase penD, catalyzes both the dehydration of yaequinolone D and the reduction of the resulting oxonium to yield penigequinolone. The protein is Prenyltransferase penI of Penicillium thymicola.